Reading from the N-terminus, the 480-residue chain is Molybdate-anion transporter (480 aa).

Helical transmembrane passes span 1–21 (MFVTAYFAVISLLALCVGLEL), 44–63 (ATFLRAYLLALWADWLQGPY), 78–98 (IAILYVCGLASCVLFAPFSGW), 129–149 (FVLIVGRILGGLSTSLLTTTF), 177–197 (TWNHGLAVGAGLVANLLAEWL), 199–219 (LGPVAPFLLAVPFLACCAWFV), 274–294 (VMLLGGVQALFESVLYIFIFL), 304–324 (SPLGIVFSCFMAASMVGSLLF), 339–359 (VLCVAVLMAFFSFFMLTFSTV), 369–389 (FLAFLLLELACGLYFPALNFL), 401–421 (SVLAWFRLPLHLLACLGLLAL), and 441–461 (FGGCAVMMLAALMAVVSLFTL).

Belongs to the major facilitator superfamily.

The protein localises to the cell membrane. Its function is as follows. Mediates high-affinity intracellular uptake of the rare oligo-element molybdenum. This Takifugu rubripes (Japanese pufferfish) protein is Molybdate-anion transporter (mfsd5).